An 87-amino-acid chain; its full sequence is UPF0250 protein PC1_1177 (87 aa).

This sequence belongs to the UPF0250 family.

The chain is UPF0250 protein PC1_1177 from Pectobacterium carotovorum subsp. carotovorum (strain PC1).